The primary structure comprises 490 residues: Hippocampus abundant transcript 1 protein (490 aa).

Methionine 1 bears the N-acetylmethionine mark. Residues 1–40 (MTQGKKKKRAANRSIMLAKKIIIKDGGTPQGIGSPSVYHA) are Extracellular-facing. A glycan (N-linked (GlcNAc...) asparagine) is linked at asparagine 12. A helical transmembrane segment spans residues 41–61 (VIVIFLEFFAWGLLTAPTLVV). Topologically, residues 62-74 (LHETFPKHTFLMN) are cytoplasmic. The helical transmembrane segment at 75–95 (GLIQGVKGLLSFLSAPLIGAL) threads the bilayer. Residues 96–103 (SDVWGRKS) are Extracellular-facing. Residues 104-124 (FLLLTVFFTCAPIPLMKISPW) form a helical membrane-spanning segment. Residues 125–126 (WY) lie on the Cytoplasmic side of the membrane. Residues 127 to 147 (FAVISVSGVFAVTFSVVFAYV) traverse the membrane as a helical segment. Residues 148-160 (ADITQEHERSMAY) are Extracellular-facing. Residues 161-181 (GLVSATFAASLVTSPAIGAYL) form a helical membrane-spanning segment. Residues 182–188 (GRVYGDS) lie on the Cytoplasmic side of the membrane. Residues 189-209 (LVVVLATAIALLDICFILVAV) form a helical membrane-spanning segment. The Extracellular segment spans residues 210–243 (PESLPEKMRPASWGAPISWEQADPFASLKKVGQD). The chain crosses the membrane as a helical span at residues 244 to 264 (SIVLLICITVFLSYLPEAGQY). Topologically, residues 265–284 (SSFFLYLRQIMKFSPESVAA) are cytoplasmic. A helical membrane pass occupies residues 285–305 (FIAVLGILSIIAQTIVLSLLM). The Extracellular portion of the chain corresponds to 306–313 (RSIGNKNT). Residues 314–334 (ILLGLGFQILQLAWYGFGSEP) traverse the membrane as a helical segment. Residues 335–337 (WMM) are Cytoplasmic-facing. A helical transmembrane segment spans residues 338–358 (WAAGAVAAMSSITFPAVSALV). The Extracellular portion of the chain corresponds to 359–379 (SRTADADQQGVVQGMITGIRG). The helical transmembrane segment at 380–400 (LCNGLGPALYGFIFYIFHVEL) threads the bilayer. At 401-427 (KELPITGTDLGTNTSPQHHFEQNSIIP) the chain is on the cytoplasmic side. The helical transmembrane segment at 428 to 448 (GPPFLFGACSVLLALLVALFI) threads the bilayer. The Extracellular segment spans residues 449-490 (PEHTNLSLRSSSWRKHCGSHSHPHNTQAPGEAKEPLLQDTNV). N-linked (GlcNAc...) asparagine glycosylation is present at asparagine 453. Positions 465-490 (CGSHSHPHNTQAPGEAKEPLLQDTNV) are disordered.

This sequence belongs to the major facilitator superfamily.

It is found in the membrane. This is Hippocampus abundant transcript 1 protein from Homo sapiens (Human).